We begin with the raw amino-acid sequence, 127 residues long: Large ribosomal subunit protein bL19 (127 aa).

The protein belongs to the bacterial ribosomal protein bL19 family.

Its function is as follows. This protein is located at the 30S-50S ribosomal subunit interface and may play a role in the structure and function of the aminoacyl-tRNA binding site. This is Large ribosomal subunit protein bL19 from Ruegeria pomeroyi (strain ATCC 700808 / DSM 15171 / DSS-3) (Silicibacter pomeroyi).